We begin with the raw amino-acid sequence, 286 residues long: Type II restriction enzyme NgoMIV (286 aa).

Positions 140 and 186 each coordinate Mg(2+).

As to quaternary structure, homotetramer. Mg(2+) is required as a cofactor.

It catalyses the reaction Endonucleolytic cleavage of DNA to give specific double-stranded fragments with terminal 5'-phosphates.. In terms of biological role, a P subtype restriction enzyme that recognizes the double-stranded sequence 5'-GCCGGC-3' and cleaves after G-1. This Neisseria gonorrhoeae protein is Type II restriction enzyme NgoMIV (ngoMIVR).